A 93-amino-acid polypeptide reads, in one-letter code: Translation initiation factor IF-1 (93 aa).

The S1-like domain occupies 1 to 72 (MAKEELIQFE…EKGRLIFRHK (72 aa)). Residues 70-93 (RHKDERPGGGPPRGAPPRGQFRRR) form a disordered region.

Belongs to the IF-1 family. Component of the 30S ribosomal translation pre-initiation complex which assembles on the 30S ribosome in the order IF-2 and IF-3, IF-1 and N-formylmethionyl-tRNA(fMet); mRNA recruitment can occur at any time during PIC assembly.

It localises to the cytoplasm. One of the essential components for the initiation of protein synthesis. Stabilizes the binding of IF-2 and IF-3 on the 30S subunit to which N-formylmethionyl-tRNA(fMet) subsequently binds. Helps modulate mRNA selection, yielding the 30S pre-initiation complex (PIC). Upon addition of the 50S ribosomal subunit IF-1, IF-2 and IF-3 are released leaving the mature 70S translation initiation complex. This chain is Translation initiation factor IF-1, found in Rhodopseudomonas palustris (strain BisB18).